The primary structure comprises 443 residues: Sperm-associated antigen 4 protein (443 aa).

The span at 1-36 shows a compositional bias: low complexity; that stretch reads MRRSPRSGSAASSHNHTPNFYSENSNSSHSATSGDS. Positions 1–107 are disordered; it reads MRRSPRSGSA…VRGGASEPSG (107 aa). 2 helical membrane-spanning segments follow: residues 137-157 and 168-188; these read FLSLLFQVLSMVLSLAVDGLV and FLFTAVSLLSIFLAALWWGLL. A coiled-coil region spans residues 203-244; the sequence is TLSQYHHRVHSQGQQLQQLQAELNKLHKEVSSVRAAHSERVA. Residues 267–427 form the SUN domain; sequence GASIDLEKTS…YRVRAHGVRT (161 aa).

Self-associates. Interacts with ODF1. May associate with microtubules. Interacts with SUN3 and SYNE1; suggesting the formation of a spermatogenesis-specific LINC complex; a SUN domain-based heterotrimer of SPAG4 and SUN3 may associate with SYNE1. Interacts with SEPT12 and LMNB1; during spermatogenesis. Isoform 1 is testis specific and is exclusively expressed in spermatids.

Its subcellular location is the membrane. The protein localises to the cytoplasm. It is found in the cytoskeleton. It localises to the nucleus envelope. The protein resides in the nucleus inner membrane. Its subcellular location is the flagellum axoneme. Its function is as follows. Involved in spermatogenesis. Required for sperm head formation but not required to establish and maintain general polarity of the sperm head. Required for anchoring and organization of the manchette. Required for targeting of SUN3 and probably SYNE1 through a probable SUN1:SYNE3 LINC complex to the nuclear envelope and involved in accurate posterior sperm head localization of the complex. May anchor SUN3 the nuclear envelope. Involved in maintenance of the nuclear envelope integrity. May assist the organization and assembly of outer dense fibers (ODFs), a specific structure of the sperm tail. In Mus musculus (Mouse), this protein is Sperm-associated antigen 4 protein (Spag4).